A 390-amino-acid chain; its full sequence is Probable splicing factor YJU2B (390 aa).

The tract at residues 354–390 (DACKASSSSEEENSIDSCATGKSLVADYSDSDSGSEV) is disordered.

Belongs to the CWC16 family.

The protein localises to the nucleus. Functionally, may be involved in mRNA splicing. The sequence is that of Probable splicing factor YJU2B (yju2b) from Danio rerio (Zebrafish).